The primary structure comprises 90 residues: uncharacterized protein (90 aa).

The N-terminal stretch at 1–18 (MKTLPVLVLSLTLLTVFS) is a signal peptide. Residues 28-50 (QAKQLLRSRRQDRPSKPGFPDEP) are disordered.

The protein resides in the secreted. This is an uncharacterized protein from Homo sapiens (Human).